The sequence spans 279 residues: Ultraviolet N-glycosylase/AP lyase (279 aa).

Residues 123 to 142 (LEDLVALPGVGRKTAFVVLG) enclose the HhH domain. Cysteine 203, cysteine 210, cysteine 213, and cysteine 219 together coordinate [4Fe-4S] cluster. Positions 256 to 279 (TAGAAGPRPRAGGXAPGLPAQPFR) are disordered.

This sequence belongs to the Nth/MutY family. Requires [4Fe-4S] cluster as cofactor.

Functionally, DNA repair enzyme that has both DNA N-glycosylase activity and AP-lyase activity. Initiates repair at cis-syn pyrimidine dimers. Proceeds via an imino enzyme:DNA intermediate. This Micrococcus luteus (strain ATCC 4698 / DSM 20030 / JCM 1464 / CCM 169 / CCUG 5858 / IAM 1056 / NBRC 3333 / NCIMB 9278 / NCTC 2665 / VKM Ac-2230) (Micrococcus lysodeikticus) protein is Ultraviolet N-glycosylase/AP lyase (pdg).